A 273-amino-acid chain; its full sequence is Pantothenate synthetase (273 aa).

27-34 (MGALHEGH) serves as a coordination point for ATP. Residue H34 is the Proton donor of the active site. Residue Q58 participates in (R)-pantoate binding. Residue Q58 participates in beta-alanine binding. 144-147 (GKKD) lines the ATP pocket. Q150 is a (R)-pantoate binding site. ATP-binding positions include V173 and 181-184 (LSSR).

It belongs to the pantothenate synthetase family. In terms of assembly, homodimer.

The protein localises to the cytoplasm. It catalyses the reaction (R)-pantoate + beta-alanine + ATP = (R)-pantothenate + AMP + diphosphate + H(+). Its pathway is cofactor biosynthesis; (R)-pantothenate biosynthesis; (R)-pantothenate from (R)-pantoate and beta-alanine: step 1/1. Catalyzes the condensation of pantoate with beta-alanine in an ATP-dependent reaction via a pantoyl-adenylate intermediate. In Sulfurimonas denitrificans (strain ATCC 33889 / DSM 1251) (Thiomicrospira denitrificans (strain ATCC 33889 / DSM 1251)), this protein is Pantothenate synthetase.